Here is a 489-residue protein sequence, read N- to C-terminus: Cryptochrome DASH (489 aa).

A Photolyase/cryptochrome alpha/beta domain is found at Pro-6–Leu-140.

It belongs to the DNA photolyase class-1 family. Requires FAD as cofactor. It depends on (6R)-5,10-methylene-5,6,7,8-tetrahydrofolate as a cofactor.

Its function is as follows. May have a photoreceptor function. Binds DNA; represses transcription of at least 8 genes, including slr0364 and slr1866. Does not encode a DNA photolyase function. Its disruption does not affect circadian rhythm. The sequence is that of Cryptochrome DASH (cry) from Synechocystis sp. (strain ATCC 27184 / PCC 6803 / Kazusa).